A 334-amino-acid polypeptide reads, in one-letter code: Protein-methionine-sulfoxide reductase catalytic subunit MsrP (334 aa).

The tat-type signal signal peptide spans 1–44 (MKKIRPLTEADVTAESAFFMQRRQVLKALGISAAALSLPSTAQA). Residues Asn-88, 91–92 (YE), Cys-146, Thr-181, Asn-233, Arg-238, and 249–251 (GIK) contribute to the Mo-molybdopterin site.

This sequence belongs to the MsrP family. As to quaternary structure, heterodimer of a catalytic subunit (MsrP) and a heme-binding subunit (MsrQ). Mo-molybdopterin is required as a cofactor. Predicted to be exported by the Tat system. The position of the signal peptide cleavage has not been experimentally proven.

It localises to the periplasm. It carries out the reaction L-methionyl-[protein] + a quinone + H2O = L-methionyl-(S)-S-oxide-[protein] + a quinol. The catalysed reaction is L-methionyl-[protein] + a quinone + H2O = L-methionyl-(R)-S-oxide-[protein] + a quinol. Functionally, part of the MsrPQ system that repairs oxidized periplasmic proteins containing methionine sulfoxide residues (Met-O), using respiratory chain electrons. Thus protects these proteins from oxidative-stress damage caused by reactive species of oxygen and chlorine generated by the host defense mechanisms. MsrPQ is essential for the maintenance of envelope integrity under bleach stress, rescuing a wide series of structurally unrelated periplasmic proteins from methionine oxidation, including the primary periplasmic chaperone SurA and the lipoprotein Pal. The catalytic subunit MsrP is non-stereospecific, being able to reduce both (R-) and (S-) diastereoisomers of methionine sulfoxide. In Salmonella agona (strain SL483), this protein is Protein-methionine-sulfoxide reductase catalytic subunit MsrP.